The sequence spans 584 residues: Optineurin (584 aa).

Residues 1-32 form a disordered region; it reads MSHQPLSCLTEKGDSPCETPGNGPSNMVHPSL. Residues 38–180 adopt a coiled-coil conformation; it reads EELLQQMKEL…VSELQLKLNS (143 aa). The interval 58–219 is interaction with Rab8; that stretch reads MKLNNQAMKG…TPTRTDPISL (162 aa). The LIR motif lies at 186-191; sequence DSFVEI. A Phosphoserine modification is found at S187. Coiled-coil stretches lie at residues 243-278 and 307-511; these read CLREGNQKVERLEVALREAKERISDFEKKANGHSST and IQVT…DIEE. Residues 267-295 show a composition bias toward basic and acidic residues; sequence DFEKKANGHSSTEKQTARRADREKEDKGQ. The disordered stretch occupies residues 267 to 302; it reads DFEKKANGHSSTEKQTARRADREKEDKGQESVGSEV. At S345 the chain carries Phosphoserine. The interval 414 to 584 is interaction with HD; it reads TKQQAEKVDK…LQIHVMDCII (171 aa). The interaction with MYO6 stretch occupies residues 415–524; it reads KQQAEKVDKM…RQSLMEMQCR (110 aa). Residues 477–482 carry the UBAN motif; the sequence is DFHAER. The residue at position 530 (S530) is a Phosphoserine. The CCHC NOA-type zinc-finger motif lies at 554–584; it reads PRSIPIHSCPKCGEVLPDIDTLQIHVMDCII. C562, C565, H578, and C582 together coordinate Zn(2+).

As to quaternary structure, self-associates. Interacts with HD, GTF3A, TRAF3, TBK1 and MYO6. Interacts (via UBAN) with ubiquitinated TFRC. Interacts with active GTP-bound Rab8 (RAB8A and/or RAB8B). Interacts with TBC1D17. Binds to linear ubiquitin chains. Interacts with LC3 family members MAP1LC3A, MAP1LC3B, GABARAP, GABARAPL1 and GABARAPL2; OPTN phosphorylation increases the association (at least with MAP1LC3B). Interacts with RAB12; the interaction may be indirect. Interacts with TBK1; this interaction leads to the Golgi localization of TBK1 and its subsequent activation. Interacts with palmitoyltransferase ZDHHC17/HIP14; the interaction does not lead to palmitoylation of OPTN. Interacts with CYLD. Interacts with TOM1; the interaction is indirect and is mediated by MYO6, which acts as a bridge between TOM1 and OPTN. Interacts with USP12; the interaction is independent of USP12 deubiquitinase activity and may be involved in regulation of autophagic flux. Phosphorylated by TBK1, leading to restrict bacterial proliferation in case of infection. In terms of tissue distribution, in eye, it is expressed in anterior segment, retina, and optic nerve blood vessels (at protein level). Highly expressed in adult liver, heart and testis.

Its subcellular location is the cytoplasm. It localises to the perinuclear region. The protein localises to the golgi apparatus. The protein resides in the trans-Golgi network. It is found in the cytoplasmic vesicle. Its subcellular location is the autophagosome. It localises to the recycling endosome. In terms of biological role, plays an important role in the maintenance of the Golgi complex, in membrane trafficking, in exocytosis, through its interaction with myosin VI and Rab8. Links myosin VI to the Golgi complex and plays an important role in Golgi ribbon formation. Plays a role in the activation of innate immune response during viral infection. Mechanistically, recruits TBK1 at the Golgi apparatus, promoting its trans-phosphorylation after RLR or TLR3 stimulation. In turn, activated TBK1 phosphorylates its downstream partner IRF3 to produce IFN-beta. Plays a neuroprotective role in the eye and optic nerve. May act by regulating membrane trafficking and cellular morphogenesis via a complex that contains Rab8 and huntingtin (HD). Mediates the interaction of Rab8 with the probable GTPase-activating protein TBC1D17 during Rab8-mediated endocytic trafficking, such as that of transferrin receptor (TFRC/TfR); regulates Rab8 recruitment to tubules emanating from the endocytic recycling compartment. Autophagy receptor that interacts directly with both the cargo to become degraded and an autophagy modifier of the MAP1 LC3 family; targets ubiquitin-coated bacteria (xenophagy), such as cytoplasmic Salmonella enterica, and appears to function in the same pathway as SQSTM1 and CALCOCO2/NDP52. This is Optineurin (Optn) from Mus musculus (Mouse).